We begin with the raw amino-acid sequence, 151 residues long: Large ribosomal subunit protein bL9 (151 aa).

This sequence belongs to the bacterial ribosomal protein bL9 family.

Its function is as follows. Binds to the 23S rRNA. This chain is Large ribosomal subunit protein bL9, found in Pseudothermotoga lettingae (strain ATCC BAA-301 / DSM 14385 / NBRC 107922 / TMO) (Thermotoga lettingae).